Reading from the N-terminus, the 65-residue chain is Large ribosomal subunit protein uL29 (65 aa).

The protein belongs to the universal ribosomal protein uL29 family.

In Buchnera aphidicola subsp. Acyrthosiphon pisum (strain APS) (Acyrthosiphon pisum symbiotic bacterium), this protein is Large ribosomal subunit protein uL29 (rpmC).